The primary structure comprises 123 residues: Defensin beta 118 (123 aa).

The first 19 residues, 1-19 (MKLLLLALPILVLLPQVIP), serve as a signal peptide directing secretion. Intrachain disulfides connect C27–C54, C34–C48, and C38–C55. Positions 65-123 (LPTTSPTPLSDSTPGIIDNILTIRFTTDYFEISSKKDMVEESEAGQGTQTSPPNVHHTS) are excised as a propeptide. A disordered region spans residues 100–123 (KDMVEESEAGQGTQTSPPNVHHTS). Over residues 109–123 (GQGTQTSPPNVHHTS) the composition is skewed to polar residues.

This sequence belongs to the beta-defensin family. In terms of processing, the three-dimensional structure formed by the three intramolecular disulfide bridges is indispensable for antimicrobial activity. As to expression, high-level and epididymis-specific expression. Most abundant in the epithelium of the caput and is also present in the lumen and bound to sperm.

Its subcellular location is the secreted. Functionally, host defense peptide that exhibits antimicrobial activity against both Gram-negative bacteria, such as E.coli and S.typhimurium, and Gram-positive bacteria, such as S.aureus and B.subtilis. Inhibits cell adhesion of E.coli on intestinal epithelial enterocytes. Causes rapid permeabilization of both the outer and inner membrane of E.coli, leading to morphological alterations on the bacterial surface. Binds to bacterial lipopolysaccharides (LPS) with high affinity, and may thereby be involved in immunoregulation through LPS neutralization. May contribute to epididymal innate immunity and protect the sperm against attack by microorganisms. The protein is Defensin beta 118 (DEFB118) of Macaca mulatta (Rhesus macaque).